A 385-amino-acid chain; its full sequence is Methionine aminopeptidase 1 (385 aa).

The C6H2-type zinc-finger motif lies at 6–59 (TRVCETAGCSSEAKLQCPTCLKLGIQGSYFCSQECFKGSWATHKLLHKKAKDEK). Zn(2+) contacts are provided by Cys-9, Cys-14, Cys-22, Cys-25, Cys-36, Cys-40, His-48, and His-52. His-203 provides a ligand contact to a protein. Residues Asp-220, Asp-231, and His-294 each coordinate Zn(2+). His-301 contacts a protein. Positions 327 and 358 each coordinate Zn(2+).

The protein belongs to the peptidase M24A family. Methionine aminopeptidase type 1 subfamily. In terms of assembly, associates with the 60S ribosomal subunit of the 80S translational complex. Zn(2+) is required as a cofactor. The cofactor is Co(2+). Mn(2+) serves as cofactor. Requires Fe(2+) as cofactor.

The protein localises to the cytoplasm. It carries out the reaction Release of N-terminal amino acids, preferentially methionine, from peptides and arylamides.. In terms of biological role, cotranslationally removes the N-terminal methionine from nascent proteins. The N-terminal methionine is often cleaved when the second residue in the primary sequence is small and uncharged (Met-Ala-, Cys, Gly, Pro, Ser, Thr, or Val). In Gallus gallus (Chicken), this protein is Methionine aminopeptidase 1 (METAP1).